We begin with the raw amino-acid sequence, 745 residues long: Myeloperoxidase (745 aa).

The first 48 residues, 1 to 48 (MGVPFFSSLRCMVDLGPCWAGGLTAEMKLLLALAGLLAILATPQPSEG), serve as a signal peptide directing secretion. Residue asparagine 139 is glycosylated (N-linked (GlcNAc...) asparagine). A disulfide bridge connects residues cysteine 167 and cysteine 180. Aspartate 260 lines the heme b pocket. The active-site Proton acceptor is histidine 261. Ca(2+) is bound at residue aspartate 262. Disulfide bonds link cysteine 281–cysteine 291 and cysteine 285–cysteine 309. Cysteine 316 is subject to Cysteine sulfenic acid (-SOH). Asparagine 323 carries an N-linked (GlcNAc...) asparagine glycan. Residues threonine 334, phenylalanine 336, aspartate 338, and serine 340 each coordinate Ca(2+). N-linked (GlcNAc...) asparagine glycosylation is found at asparagine 355 and asparagine 391. Residues cysteine 387 and cysteine 398 are joined by a disulfide bond. Residues glutamate 408 and methionine 409 each coordinate heme b. N-linked (GlcNAc...) asparagine glycosylation occurs at asparagine 483. Residue histidine 502 participates in heme b binding. Intrachain disulfides connect cysteine 606–cysteine 663 and cysteine 704–cysteine 730. A glycan (N-linked (GlcNAc...) asparagine) is linked at asparagine 729.

This sequence belongs to the peroxidase family. XPO subfamily. Homodimer; disulfide-linked. Each monomer consists of a light and a heavy chain. Found in a complex with CP and LTF; interacts directly with CP, which protects CP antioxidant properties by MPO. Ca(2+) is required as a cofactor. It depends on heme b as a cofactor.

The protein localises to the lysosome. The enzyme catalyses chloride + H2O2 + H(+) = hypochlorous acid + H2O. In terms of biological role, part of the host defense system of polymorphonuclear leukocytes. It is responsible for microbicidal activity against a wide range of organisms. In the stimulated PMN, MPO catalyzes the production of hypohalous acids, primarily hypochlorous acid in physiologic situations, and other toxic intermediates that greatly enhance PMN microbicidal activity. Mediates the proteolytic cleavage of alpha-1-microglobulin to form t-alpha-1-microglobulin, which potently inhibits oxidation of low-density lipoprotein particles and limits vascular damage. This Homo sapiens (Human) protein is Myeloperoxidase.